Consider the following 417-residue polypeptide: WD repeat and FYVE domain-containing protein 2 (417 aa).

4 WD repeats span residues 29–68, 119–157, 202–241, and 245–284; these read GHVA…QFWP, CHAG…NKVG, AHTN…GEAY, and GHNG…VETP. An FYVE-type zinc finger spans residues 286 to 357; sequence WKTSDCCQKC…ICNDCAGRMK (72 aa). Residues Cys292, Cys295, Cys319, Cys322, Cys327, Cys330, Cys349, and Cys352 each contribute to the Zn(2+) site. Residues 373–412 form a WD 5 repeat; the sequence is EIRTGITAMHLQETLGLLVTSGQNRVVMIWDVRSVCSAPS.

Plays a role in coelomocyte endocytosis. This chain is WD repeat and FYVE domain-containing protein 2, found in Caenorhabditis briggsae.